A 626-amino-acid polypeptide reads, in one-letter code: Endoglucanase 19 (626 aa).

Positions 1-23 (MGSRTTISILVVLLLGLVQLAIS) are cleaved as a signal peptide. The active-site Nucleophile is aspartate 79. Active-site residues include histidine 412, aspartate 464, and glutamate 473. The segment at 515–536 (APVPQRKPTKPPAASSPSPITI) is disordered. The segment covering 526–536 (PAASSPSPITI) has biased composition (low complexity). Asparagine 560 and asparagine 622 each carry an N-linked (GlcNAc...) asparagine glycan.

The protein belongs to the glycosyl hydrolase 9 (cellulase E) family.

Its subcellular location is the secreted. It carries out the reaction Endohydrolysis of (1-&gt;4)-beta-D-glucosidic linkages in cellulose, lichenin and cereal beta-D-glucans.. The chain is Endoglucanase 19 from Arabidopsis thaliana (Mouse-ear cress).